We begin with the raw amino-acid sequence, 292 residues long: MFTGSIVALVTPMDEKGNVSRSCLKKLIDYHVANGTSAIVSVGTTGESATLSHDEHGDVVMMTLELADGRIPVIAGTGANATAEAISLTQRFNDSGVVGCLTVTPYYNRPTQEGLFQHFKAIAEHTDLPQILYNVPSRTGCDMLPETVGRLAEIKNIIAIKEATGNLTRVHQIKELVSDDFILLSGDDASALDFMQLGGHGVISVTANVAARDMADMCKLAAEGQFTEARVINQRLMPLHNKLFVEPNPIPVKWACKALGLVATDTLRLPMTPITDNGRDIVKAALQHAGLL.

Residue Thr-45 coordinates pyruvate. Tyr-133 functions as the Proton donor/acceptor in the catalytic mechanism. Catalysis depends on Lys-161, which acts as the Schiff-base intermediate with substrate. A pyruvate-binding site is contributed by Ile-203.

It belongs to the DapA family. As to quaternary structure, homotetramer; dimer of dimers.

It is found in the cytoplasm. It carries out the reaction L-aspartate 4-semialdehyde + pyruvate = (2S,4S)-4-hydroxy-2,3,4,5-tetrahydrodipicolinate + H2O + H(+). It functions in the pathway amino-acid biosynthesis; L-lysine biosynthesis via DAP pathway; (S)-tetrahydrodipicolinate from L-aspartate: step 3/4. In terms of biological role, catalyzes the condensation of (S)-aspartate-beta-semialdehyde [(S)-ASA] and pyruvate to 4-hydroxy-tetrahydrodipicolinate (HTPA). This is 4-hydroxy-tetrahydrodipicolinate synthase from Salmonella arizonae (strain ATCC BAA-731 / CDC346-86 / RSK2980).